The following is a 379-amino-acid chain: Gonadotropin-releasing hormone II receptor (379 aa).

Topologically, residues 1–45 are extracellular; sequence MSGNTTLLLSNPTNVLDNSSVLNVSVSPPVLKWETPTFTTAARFR. 3 N-linked (GlcNAc...) asparagine glycosylation sites follow: N4, N18, and N23. A helical transmembrane segment spans residues 46-65; that stretch reads VAATLVLFVFAAASNLSVLL. Residues 66–80 lie on the Cytoplasmic side of the membrane; sequence SVTRGRGRRLASHLR. Residues 81 to 100 traverse the membrane as a helical segment; the sequence is PLIASLASADLVMTFVVMPL. The Extracellular portion of the chain corresponds to 101–118; that stretch reads DAVWNVTVQWYAGDAMCK. N105 carries an N-linked (GlcNAc...) asparagine glycan. Residues C117 and C194 are joined by a disulfide bond. A helical transmembrane segment spans residues 119-140; it reads LMCFLKLFAMHSAAFILVVVSL. Topologically, residues 141 to 167 are cytoplasmic; the sequence is DRHHAILHPLDTLDAGRRNRRMLLTAW. A helical transmembrane segment spans residues 168-184; it reads ILSLLLASPQLFIFRAI. Residues 185 to 210 lie on the Extracellular side of the membrane; that stretch reads KAKGVDFVQCATHGSFQQHWQETAYN. A helical transmembrane segment spans residues 211 to 230; that stretch reads MFHFVTLYVFPLLVMSLCYT. Topologically, residues 231 to 283 are cytoplasmic; that stretch reads RILVEINRQMHRSKDKAGEPCLRRSGTDMIPKARMKTLKMTIIIVASFVICWT. A helical transmembrane segment spans residues 284-302; it reads PYYLLGIWYWFQPQMLHVI. Topologically, residues 303–308 are extracellular; the sequence is PDYVHH. The chain crosses the membrane as a helical span at residues 309–328; that stretch reads VFFVFGNLNTCCDPVIYGFF. At 329–379 the chain is on the cytoplasmic side; sequence TPSFRADLSRCFCWRNQNASAKSLPHFSGHRREVSGEAESDLGSGDQPSGQ. The tract at residues 355-379 is disordered; it reads FSGHRREVSGEAESDLGSGDQPSGQ.

This sequence belongs to the G-protein coupled receptor 1 family. In terms of processing, phosphorylated on the C-terminal cytoplasmic tail.

It localises to the cell membrane. Functionally, receptor for gonadotropin releasing hormone II (GnRH II). This receptor mediates its action by association with G proteins that activate a phosphatidylinositol-calcium second messenger system. This Clarias gariepinus (North African catfish) protein is Gonadotropin-releasing hormone II receptor.